Reading from the N-terminus, the 215-residue chain is MTVELEKIAGSFFISKGWKTFVHRTGLLSGQYIRFQVLTPSKINVLLFDKKKDSKLPMIPSSKKQIKTAPKRSTGITINDMPTSKHASMLISHTSNKETSSDSRTESMTDIPSSSDNSAVTPDIKNYISIIGQFLQRSSKFYIVTMNNTFMKQDRLVEAAGSDSVTMLLHKSSDDRCNLKRGWATFAATNAIHLHSVCIFHFYKAPNVKITIDVL.

The segment at residues 1-51 is a DNA-binding region (TF-B3 1); the sequence is MTVELEKIAGSFFISKGWKTFVHRTGLLSGQYIRFQVLTPSKINVLLFDKK. The disordered stretch occupies residues 92-117; it reads SHTSNKETSSDSRTESMTDIPSSSDN. Residues 95–107 are compositionally biased toward basic and acidic residues; sequence SNKETSSDSRTES. Over residues 108–117 the composition is skewed to polar residues; that stretch reads MTDIPSSSDN. The TF-B3 2 DNA-binding region spans 123-215; that stretch reads DIKNYISIIG…PNVKITIDVL (93 aa).

It localises to the nucleus. In Oryza sativa subsp. japonica (Rice), this protein is Putative B3 domain-containing protein Os11g0625400.